Reading from the N-terminus, the 382-residue chain is MSQSNNVTDLARANIRALTPYMSARRLGGNGDVWLNANEYPLGTEYQLTTQTFNRYPECQPKHVIERYAAYAGLPPEQVLVSRGADEGIELLIRAFCEPGQDAILFCPPTYGMYAVSAETFGVERRTVPAQADWQLDLPAIANNLEQVKVIYVCSPNNPTGNLINPADLQAVLALAQGRAIVAIDEAYIEFCPQASVSNWLKDYPNLVILRTLSKAFALAGLRCGFTLANSDIIQLLLKVIAPYPLSTPVADIAAQALSPQGIEQMRQRVSEVRANRAWLQSALQDCACVEQVFTSESNYLLVRFTASSSVFKVLWDQGIILRDQNKQPGLANCLRITIGTRQECERVIAALAPLAGIDNSNNIDNQSKTHSQTSSIRKGTI.

Lys215 carries the post-translational modification N6-(pyridoxal phosphate)lysine. A disordered region spans residues 363–382; sequence NIDNQSKTHSQTSSIRKGTI.

Belongs to the class-II pyridoxal-phosphate-dependent aminotransferase family. Histidinol-phosphate aminotransferase subfamily. As to quaternary structure, homodimer. Pyridoxal 5'-phosphate is required as a cofactor.

The enzyme catalyses L-histidinol phosphate + 2-oxoglutarate = 3-(imidazol-4-yl)-2-oxopropyl phosphate + L-glutamate. The protein operates within amino-acid biosynthesis; L-histidine biosynthesis; L-histidine from 5-phospho-alpha-D-ribose 1-diphosphate: step 7/9. The sequence is that of Histidinol-phosphate aminotransferase from Yersinia pseudotuberculosis serotype O:1b (strain IP 31758).